Here is a 371-residue protein sequence, read N- to C-terminus: tRNA-specific 2-thiouridylase MnmA (371 aa).

ATP is bound by residues 7-14 (AMSGGVDS) and L33. Catalysis depends on C101, which acts as the Nucleophile. C101 and C213 are disulfide-bonded. ATP is bound at residue G125. Residues 163-165 (KDQ) form an interaction with tRNA region. The active-site Cysteine persulfide intermediate is C213.

The protein belongs to the MnmA/TRMU family.

It is found in the cytoplasm. It carries out the reaction S-sulfanyl-L-cysteinyl-[protein] + uridine(34) in tRNA + AH2 + ATP = 2-thiouridine(34) in tRNA + L-cysteinyl-[protein] + A + AMP + diphosphate + H(+). In terms of biological role, catalyzes the 2-thiolation of uridine at the wobble position (U34) of tRNA, leading to the formation of s(2)U34. This chain is tRNA-specific 2-thiouridylase MnmA, found in Roseiflexus castenholzii (strain DSM 13941 / HLO8).